Reading from the N-terminus, the 278-residue chain is MPIAPSTYYDHINREPSRRELRDGELKEHISRVHAANYGVYGARKVWLTLNREGIEVARCTVERLMTKLGLSGTTRGKARRTTIADPATARPADLVQRRFGPPAPNRLWVADLTYVSTWAGFAYVAFVTDAYARRILGWRVASTMATSMVLDAIEQAIWTRQQESVLDLKDVIHHTDRGSQYTSIRFSERLAEAGIQPSVGAVGSSYDNALAETINGLYKTELIKPGKPWRSIEDVELATARWVDWFNHRRLYQYCGDVPPVELEAAYYAQRQRPAAG.

The region spanning 101-268 is the Integrase catalytic domain; it reads GPPAPNRLWV…VPPVELEAAY (168 aa).

Involved in the transposition of the insertion sequence. The chain is Putative transposase for insertion sequence element IS986/IS6110 from Mycobacterium tuberculosis (strain CDC 1551 / Oshkosh).